Reading from the N-terminus, the 245-residue chain is Uridylate kinase (245 aa).

12-15 serves as a coordination point for ATP; the sequence is KLSG. The involved in allosteric activation by GTP stretch occupies residues 20–25; it reads GERGVG. G54 is a binding site for UMP. Positions 55 and 59 each coordinate ATP. Residues D74 and 135–142 each bind UMP; that span reads IGSPYFST. Positions 163, 169, and 172 each coordinate ATP.

It belongs to the UMP kinase family. Homohexamer.

The protein resides in the cytoplasm. It catalyses the reaction UMP + ATP = UDP + ADP. It participates in pyrimidine metabolism; CTP biosynthesis via de novo pathway; UDP from UMP (UMPK route): step 1/1. With respect to regulation, allosterically activated by GTP. Inhibited by UTP. Its function is as follows. Catalyzes the reversible phosphorylation of UMP to UDP. The polypeptide is Uridylate kinase (Streptococcus pneumoniae serotype 2 (strain D39 / NCTC 7466)).